The chain runs to 225 residues: Cytidylate kinase (225 aa).

Residue 10–18 (GPASSGKST) participates in ATP binding.

The protein belongs to the cytidylate kinase family. Type 1 subfamily.

Its subcellular location is the cytoplasm. The catalysed reaction is CMP + ATP = CDP + ADP. It carries out the reaction dCMP + ATP = dCDP + ADP. This chain is Cytidylate kinase, found in Streptococcus gordonii (strain Challis / ATCC 35105 / BCRC 15272 / CH1 / DL1 / V288).